We begin with the raw amino-acid sequence, 166 residues long: Sec-independent protein translocase protein TatB (166 aa).

The helical transmembrane segment at 2 to 22 (FNDIGALELLTLGVLAVLVFG) threads the bilayer. The segment at 110-166 (TPAASDTANSAVNGSAGAAADGVTTSLTKTGETTPDLLKKAPQQAQPERPPFDADAT) is disordered. Low complexity predominate over residues 117-129 (ANSAVNGSAGAAA). Polar residues predominate over residues 132 to 142 (VTTSLTKTGET).

It belongs to the TatB family. As to quaternary structure, the Tat system comprises two distinct complexes: a TatABC complex, containing multiple copies of TatA, TatB and TatC subunits, and a separate TatA complex, containing only TatA subunits. Substrates initially bind to the TatABC complex, which probably triggers association of the separate TatA complex to form the active translocon.

It localises to the cell membrane. Its function is as follows. Part of the twin-arginine translocation (Tat) system that transports large folded proteins containing a characteristic twin-arginine motif in their signal peptide across membranes. Together with TatC, TatB is part of a receptor directly interacting with Tat signal peptides. TatB may form an oligomeric binding site that transiently accommodates folded Tat precursor proteins before their translocation. This Streptomyces griseus subsp. griseus (strain JCM 4626 / CBS 651.72 / NBRC 13350 / KCC S-0626 / ISP 5235) protein is Sec-independent protein translocase protein TatB.